A 349-amino-acid chain; its full sequence is Adenine deaminase (349 aa).

H24, H26, and H204 together coordinate Zn(2+). Residue E207 is the Proton donor of the active site. D285 provides a ligand contact to Zn(2+). D286 is a binding site for substrate.

Belongs to the metallo-dependent hydrolases superfamily. Adenosine and AMP deaminases family. Adenine deaminase type 2 subfamily. Requires Zn(2+) as cofactor.

The enzyme catalyses adenine + H2O + H(+) = hypoxanthine + NH4(+). In terms of biological role, catalyzes the hydrolytic deamination of adenine to hypoxanthine. Plays an important role in the purine salvage pathway and in nitrogen catabolism. The polypeptide is Adenine deaminase (Trichlorobacter lovleyi (strain ATCC BAA-1151 / DSM 17278 / SZ) (Geobacter lovleyi)).